A 237-amino-acid chain; its full sequence is Proteasome subunit beta (237 aa).

Positions 1 to 27 (MSKFPDLPGMKNLDANPYEPELASFDD) are disordered. Residues 1–42 (MSKFPDLPGMKNLDANPYEPELASFDDMDADAGDGDAVAKTG) constitute a propeptide, removed in mature form; by autocatalysis. The active-site Nucleophile is the Thr43.

The protein belongs to the peptidase T1B family. As to quaternary structure, the 20S proteasome core is composed of 14 alpha and 14 beta subunits that assemble into four stacked heptameric rings, resulting in a barrel-shaped structure. The two inner rings, each composed of seven catalytic beta subunits, are sandwiched by two outer rings, each composed of seven alpha subunits. The catalytic chamber with the active sites is on the inside of the barrel. Has a gated structure, the ends of the cylinder being occluded by the N-termini of the alpha-subunits. Is capped at one or both ends by the proteasome regulatory ATPase, PAN.

It localises to the cytoplasm. It catalyses the reaction Cleavage of peptide bonds with very broad specificity.. The formation of the proteasomal ATPase PAN-20S proteasome complex, via the docking of the C-termini of PAN into the intersubunit pockets in the alpha-rings, triggers opening of the gate for substrate entry. Interconversion between the open-gate and close-gate conformations leads to a dynamic regulation of the 20S proteasome proteolysis activity. Functionally, component of the proteasome core, a large protease complex with broad specificity involved in protein degradation. This chain is Proteasome subunit beta, found in Halomicrobium mukohataei (strain ATCC 700874 / DSM 12286 / JCM 9738 / NCIMB 13541) (Haloarcula mukohataei).